Consider the following 120-residue polypeptide: Testis-expressed protein 48 (120 aa).

Positions 29-45 are enriched in polar residues; that stretch reads KVPSQTQEHKPSTQNLL. Positions 29 to 86 are disordered; that stretch reads KVPSQTQEHKPSTQNLLLQKDELDRQNPKRINAVSHLPSRTPLIQTKKSTSSSSSEFE. The segment covering 74–83 has biased composition (low complexity); that stretch reads TKKSTSSSSS.

This is Testis-expressed protein 48 from Homo sapiens (Human).